The primary structure comprises 581 residues: Metal transporter Nramp7.1 (581 aa).

Residues N11 and N19 are each glycosylated (N-linked (GlcNAc...) asparagine). 7 helical membrane passes run 57–77, 90–110, 146–166, 181–201, 224–244, 270–290, and 307–327; these read FLSY…PGNL, ELLW…SLAA, YCLW…EGII, LLIG…WVGV, LLIA…MSYV, IALL…ALVL, and YFLI…LAVI. N338 carries N-linked (GlcNAc...) asparagine glycosylation. Transmembrane regions (helical) follow at residues 370 to 390, 409 to 429, 434 to 454, 473 to 493, and 513 to 533; these read IYAI…TYAG, LVTR…GGSS, LIII…FALI, IYII…NIYY, and VFIG…VIYL. The interval 551-581 is disordered; the sequence is PQQQANMENGLGPEMERVPYREDLADIPLPE. The segment covering 564–574 has biased composition (basic and acidic residues); it reads EMERVPYREDL.

The protein belongs to the NRAMP (TC 2.A.55) family.

The protein localises to the membrane. In terms of biological role, probable divalent metal transporter. This chain is Metal transporter Nramp7.1, found in Populus trichocarpa (Western balsam poplar).